The chain runs to 76 residues: Demidefensin-3 (76 aa).

Positions 1 to 22 (MRTLALHTAMLLLVALHAQAEA) are cleaved as a signal peptide. A propeptide spanning residues 23–64 (RQARADEAAAQQQPGADDQGMAHSFTWPENAALPLSESERGL) is cleaved from the precursor. The tract at residues 25–45 (ARADEAAAQQQPGADDQGMAH) is disordered. Residues 30 to 44 (AAAQQQPGADDQGMA) show a composition bias toward low complexity. A disulfide bond links cysteine 68 and cysteine 73. Positions 74–76 (RLL) are excised as a propeptide.

The protein belongs to the alpha-defensin family. Theta subfamily. In terms of assembly, forms a cyclic homodimer; disulfide-linked. Post-translationally, this is a cyclic peptide.

Has antimicrobial activities against bacteria and fungi. In Macaca mulatta (Rhesus macaque), this protein is Demidefensin-3.